A 52-amino-acid chain; its full sequence is MEKVQYITRSALRRASTLEVNPQARQRLQELFVNFCLILICLLLICIIVMLL.

Residue methionine 1 is modified to N-acetylmethionine. At 1-31 (MEKVQYITRSALRRASTLEVNPQARQRLQEL) the chain is on the cytoplasmic side. Serine 16 carries the post-translational modification Phosphoserine; by PKA. Threonine 17 is subject to Phosphothreonine; by CaMK. The helical transmembrane segment at 32–52 (FVNFCLILICLLLICIIVMLL) threads the bilayer.

Belongs to the phospholamban family. Homopentamer. Phosphorylated in response to beta-adrenergic stimulation. Phosphorylation by PKA abolishes the inhibition of ATP2A2-mediated calcium uptake. Heart.

It is found in the endoplasmic reticulum membrane. The protein resides in the sarcoplasmic reticulum membrane. The protein localises to the mitochondrion membrane. It localises to the membrane. Functionally, reversibly inhibits the activity of ATP2A2/SERCA2 in cardiac sarcoplasmic reticulum by decreasing the apparent affinity of the ATPase for Ca(2+). Binds preferentially to the ATP-bound E1 conformational form of ATP2A2 which predominates at low Ca(2+) concentrations during the diastolic phase of the cardiac cycle. Inhibits ATP2A2 Ca(2+) affinity by disrupting its allosteric activation by ATP. Modulates the contractility of the heart muscle in response to physiological stimuli via its effects on ATP2A2. Modulates calcium re-uptake during muscle relaxation and plays an important role in calcium homeostasis in the heart muscle. The degree of ATP2A2 inhibition depends on the oligomeric state of PLN. ATP2A2 inhibition is alleviated by PLN phosphorylation. The sequence is that of Phospholamban (PLN) from Gallus gallus (Chicken).